The following is a 348-amino-acid chain: Holliday junction branch migration complex subunit RuvB (348 aa).

Residues M1–T20 are disordered. Residues M1 to Y183 form a large ATPase domain (RuvB-L) region. Residues L22, R23, G64, K67, T68, T69, E130–F132, R173, Y183, and R220 each bind ATP. T68 serves as a coordination point for Mg(2+). The interval T184–E254 is small ATPAse domain (RuvB-S). Residues A257 to D348 form a head domain (RuvB-H) region. DNA contacts are provided by R293, R312, and R317.

Belongs to the RuvB family. Homohexamer. Forms an RuvA(8)-RuvB(12)-Holliday junction (HJ) complex. HJ DNA is sandwiched between 2 RuvA tetramers; dsDNA enters through RuvA and exits via RuvB. An RuvB hexamer assembles on each DNA strand where it exits the tetramer. Each RuvB hexamer is contacted by two RuvA subunits (via domain III) on 2 adjacent RuvB subunits; this complex drives branch migration. In the full resolvosome a probable DNA-RuvA(4)-RuvB(12)-RuvC(2) complex forms which resolves the HJ.

The protein resides in the cytoplasm. It catalyses the reaction ATP + H2O = ADP + phosphate + H(+). Its function is as follows. The RuvA-RuvB-RuvC complex processes Holliday junction (HJ) DNA during genetic recombination and DNA repair, while the RuvA-RuvB complex plays an important role in the rescue of blocked DNA replication forks via replication fork reversal (RFR). RuvA specifically binds to HJ cruciform DNA, conferring on it an open structure. The RuvB hexamer acts as an ATP-dependent pump, pulling dsDNA into and through the RuvAB complex. RuvB forms 2 homohexamers on either side of HJ DNA bound by 1 or 2 RuvA tetramers; 4 subunits per hexamer contact DNA at a time. Coordinated motions by a converter formed by DNA-disengaged RuvB subunits stimulates ATP hydrolysis and nucleotide exchange. Immobilization of the converter enables RuvB to convert the ATP-contained energy into a lever motion, pulling 2 nucleotides of DNA out of the RuvA tetramer per ATP hydrolyzed, thus driving DNA branch migration. The RuvB motors rotate together with the DNA substrate, which together with the progressing nucleotide cycle form the mechanistic basis for DNA recombination by continuous HJ branch migration. Branch migration allows RuvC to scan DNA until it finds its consensus sequence, where it cleaves and resolves cruciform DNA. In Bradyrhizobium sp. (strain ORS 278), this protein is Holliday junction branch migration complex subunit RuvB.